The sequence spans 581 residues: Kelch-like protein 38 (581 aa).

Residues T34–T101 form the BTB domain. The BACK domain occupies C136–A237. Kelch repeat units lie at residues F285–R332, I334–N383, F384–Q431, L433–E479, R480–N521, and L523–C573.

This chain is Kelch-like protein 38 (KLHL38), found in Homo sapiens (Human).